Reading from the N-terminus, the 775-residue chain is Semaphorin-3E (775 aa).

The first 25 residues, 1 to 25 (MASAGHIITLLLWGYLLELWTGGHT), serve as a signal peptide directing secretion. The region spanning 32–516 (RLRLSHKELL…SASAVAQVRF (485 aa)) is the Sema domain. A glycan (N-linked (GlcNAc...) asparagine) is linked at Asn44. A disulfide bond links Cys105 and Cys115. The N-linked (GlcNAc...) asparagine glycan is linked to Asn126. 4 disulfides stabilise this stretch: Cys133–Cys142, Cys270–Cys382, Cys294–Cys342, and Cys519–Cys537. The N-linked (GlcNAc...) asparagine glycan is linked to Asn330. One can recognise an Ig-like C2-type domain in the interval 581 to 669 (ALDKTEEHLA…SFVHTVRKIT (89 aa)). N-linked (GlcNAc...) asparagine glycosylation is found at Asn595 and Asn596. An intrachain disulfide couples Cys654 to Cys729. A disordered region spans residues 742-775 (LKMSPSKWKYANPQEKKLRSKPEHYRLPRHTLDS). Residues 755–775 (QEKKLRSKPEHYRLPRHTLDS) show a composition bias toward basic and acidic residues.

This sequence belongs to the semaphorin family. Interacts with PLXND1.

The protein localises to the secreted. Functionally, plays an important role in signaling via the cell surface receptor PLXND1. Mediates reorganization of the actin cytoskeleton, leading to the retraction of cell projections. Promotes focal adhesion disassembly and inhibits adhesion of endothelial cells to the extracellular matrix. Regulates angiogenesis, both during embryogenesis and after birth. Can down-regulate sprouting angiogenesis. Required for normal vascular patterning during embryogenesis. Plays an important role in ensuring the specificity of synapse formation. In Homo sapiens (Human), this protein is Semaphorin-3E (SEMA3E).